The chain runs to 933 residues: Bifunctional uridylyltransferase/uridylyl-removing enzyme (933 aa).

The tract at residues 1 to 390 is uridylyltransferase; that stretch reads MLSTRAASAD…RLAALARRKD (390 aa). The tract at residues 391–745 is uridylyl-removing; it reads VDGFVVDGER…TRIDRGRAIT (355 aa). One can recognise an HD domain in the interval 506 to 628; it reads VDEHTLFALG…VQSPERLRLL (123 aa). ACT domains follow at residues 746 to 829 and 859 to 933; these read EVTI…DLTK and VIEV…DPSA.

The protein belongs to the GlnD family. Mg(2+) serves as cofactor.

The catalysed reaction is [protein-PII]-L-tyrosine + UTP = [protein-PII]-uridylyl-L-tyrosine + diphosphate. It catalyses the reaction [protein-PII]-uridylyl-L-tyrosine + H2O = [protein-PII]-L-tyrosine + UMP + H(+). Its activity is regulated as follows. Uridylyltransferase (UTase) activity is inhibited by glutamine, while glutamine activates uridylyl-removing (UR) activity. Uridylylation process is dependent on ATP and 2-oxoglutarate, which are effector molecules that likely bind to PII proteins and control their activity. Modifies, by uridylylation and deuridylylation, the PII regulatory proteins GlnB and GlnZ, in response to the nitrogen status of the cell that GlnD senses through the glutamine level. Under low glutamine levels, catalyzes the conversion of the PII proteins and UTP to PII-UMP and PPi, while under higher glutamine levels, GlnD hydrolyzes PII-UMP to PII and UMP (deuridylylation). Thus, controls uridylylation state and activity of the PII proteins, and plays an important role in the regulation of nitrogen fixation and metabolism. This chain is Bifunctional uridylyltransferase/uridylyl-removing enzyme, found in Azospirillum brasilense.